Consider the following 121-residue polypeptide: MIEYLILTCLAISVTFNMLGSIALHRFPDVYTRLHGATKCTTFGTIFATFAVVIFALARLNETRNPKYLQMALHSLIALLALLLTNPVGAHAIARASHLSGYLPKRAVVDAYLERRREKDE.

This sequence belongs to the UPF0091 family.

The protein is UPF0091 protein PH1428 of Pyrococcus horikoshii (strain ATCC 700860 / DSM 12428 / JCM 9974 / NBRC 100139 / OT-3).